The chain runs to 135 residues: Transcriptional activator protein (135 aa).

The Nuclear localization signal motif lies at 17–32; it reads KIQHHIAKKRQVRRRR. The segment at 37–54 is a zinc-finger region; that stretch reads CGCSYYIHLDCINHGFTH. The segment at 120-135 is transactivation; it reads HLDDLTVSDWSFFKSL.

The protein belongs to the geminiviridae transcriptional activator protein family. In terms of assembly, monomer. Homodimer. Homooligomer. Self-interaction correlates with nuclear localization and efficient activation of transcription. Monomers suppress local silencing by interacting with and inactivating host adenosine kinase 2 (ADK2) in the cytoplasm. Interacts with and inhibits host SNF1 kinase. Binds to ssDNA. Post-translationally, phosphorylated.

Its subcellular location is the host nucleus. It is found in the host cytoplasm. In terms of biological role, strong activator of the late viral genes promoters. Acts as a suppressor of RNA-mediated gene silencing, also known as post-transcriptional gene silencing (PTGS), a mechanism of plant viral defense that limits the accumulation of viral RNAs. TrAP suppresses the host RNA silencing by inhibiting adenosine kinase 2 (ADK2), a kinase involved in a general methylation pathway. Also suppresses the host basal defense by interacting with and inhibiting SNF1 kinase, a key regulator of cell metabolism implicated in innate antiviral defense. Determines pathogenicity. In Tomato yellow leaf curl Sardinia virus (isolate Spain-2) (TYLCSV), this protein is Transcriptional activator protein.